A 283-amino-acid polypeptide reads, in one-letter code: 2-dehydro-3-deoxyphosphooctonate aldolase (283 aa).

It belongs to the KdsA family.

The protein resides in the cytoplasm. The catalysed reaction is D-arabinose 5-phosphate + phosphoenolpyruvate + H2O = 3-deoxy-alpha-D-manno-2-octulosonate-8-phosphate + phosphate. It participates in carbohydrate biosynthesis; 3-deoxy-D-manno-octulosonate biosynthesis; 3-deoxy-D-manno-octulosonate from D-ribulose 5-phosphate: step 2/3. It functions in the pathway bacterial outer membrane biogenesis; lipopolysaccharide biosynthesis. This Prochlorococcus marinus (strain MIT 9313) protein is 2-dehydro-3-deoxyphosphooctonate aldolase.